Reading from the N-terminus, the 269-residue chain is MNMKEISKVVDLVRESNPLVHNITNVVVTNFTANGLLALGASPVMAYAKEEVAEMASIAGALVLNMGTLRPEEVEAMLLAGKSANKNDVPVLFDPVGAGATSYRTEVARYIPAEIDLAVIRGNAAEIANVINEKWEIKGVDAGTGNGNVVNIAKQAADELNTVAVITGQEDVVTDGERTILIRNGHPILTKVTGTGCLLTSVIGAFVAVEKDYVKAAVAALTFYGVAAEIAASKTVENGPGSFQIEFLNQLANTTSDDIEKYGKIEVIQ.

M45 lines the substrate pocket. 2 residues coordinate ATP: R121 and T167. Substrate is bound at residue G194.

Belongs to the Thz kinase family. The cofactor is Mg(2+).

It carries out the reaction 5-(2-hydroxyethyl)-4-methylthiazole + ATP = 4-methyl-5-(2-phosphooxyethyl)-thiazole + ADP + H(+). It participates in cofactor biosynthesis; thiamine diphosphate biosynthesis; 4-methyl-5-(2-phosphoethyl)-thiazole from 5-(2-hydroxyethyl)-4-methylthiazole: step 1/1. In terms of biological role, catalyzes the phosphorylation of the hydroxyl group of 4-methyl-5-beta-hydroxyethylthiazole (THZ). This is Hydroxyethylthiazole kinase from Bacillus mycoides (strain KBAB4) (Bacillus weihenstephanensis).